The sequence spans 136 residues: Translation initiation factor 5A (136 aa).

Lys-37 is subject to Hypusine.

This sequence belongs to the eIF-5A family.

The protein resides in the cytoplasm. Functions by promoting the formation of the first peptide bond. This chain is Translation initiation factor 5A (eIF5A), found in Thermococcus onnurineus (strain NA1).